Here is an 875-residue protein sequence, read N- to C-terminus: DNA mismatch repair protein MutS (875 aa).

626-633 lines the ATP pocket; it reads GPNMAGKS. The interval 830 to 855 is disordered; it reads RAAPPPPAPAAPKTSPVEERLREIQP. Positions 845 to 855 are enriched in basic and acidic residues; the sequence is PVEERLREIQP.

It belongs to the DNA mismatch repair MutS family.

Its function is as follows. This protein is involved in the repair of mismatches in DNA. It is possible that it carries out the mismatch recognition step. This protein has a weak ATPase activity. The sequence is that of DNA mismatch repair protein MutS from Cereibacter sphaeroides (strain ATCC 17023 / DSM 158 / JCM 6121 / CCUG 31486 / LMG 2827 / NBRC 12203 / NCIMB 8253 / ATH 2.4.1.) (Rhodobacter sphaeroides).